A 610-amino-acid polypeptide reads, in one-letter code: Elongation factor 4 (610 aa).

A tr-type G domain is found at 11–193; sequence KYIRNFSIVA…QIVTKIPAPA (183 aa). GTP-binding positions include 23-28 and 140-143; these read DHGKST and NKID.

The protein belongs to the TRAFAC class translation factor GTPase superfamily. Classic translation factor GTPase family. LepA subfamily.

Its subcellular location is the cell membrane. It catalyses the reaction GTP + H2O = GDP + phosphate + H(+). Required for accurate and efficient protein synthesis under certain stress conditions. May act as a fidelity factor of the translation reaction, by catalyzing a one-codon backward translocation of tRNAs on improperly translocated ribosomes. Back-translocation proceeds from a post-translocation (POST) complex to a pre-translocation (PRE) complex, thus giving elongation factor G a second chance to translocate the tRNAs correctly. Binds to ribosomes in a GTP-dependent manner. This is Elongation factor 4 from Levilactobacillus brevis (strain ATCC 367 / BCRC 12310 / CIP 105137 / JCM 1170 / LMG 11437 / NCIMB 947 / NCTC 947) (Lactobacillus brevis).